A 359-amino-acid chain; its full sequence is Leafy/floricaula homolog FL1 (359 aa).

Residues 113–170 are disordered; it reads SEEQVVQHSEKDQLGRAGSGDTAGTSWGAQQQRKKHRHRHHITAMKGAATEEDEEDEE. The span at 144–155 shows a compositional bias: basic residues; that stretch reads QRKKHRHRHHIT. 3 DNA-binding regions span residues 179-183, 248-255, and 320-323; these read REHPF, NKPKMRHY, and YVPT. Residues 340–352 show a composition bias toward low complexity; sequence ASSASTSTSAPTA. Positions 340–359 are disordered; sequence ASSASTSTSAPTAHHLELPY.

This sequence belongs to the FLO/LFY family. Expressed strongly in the early floral primordium and then successively in the primordia of sepals, petals, stamens and carpels. Also in the leaf primordia and young leaves.

It is found in the nucleus. In terms of biological role, probable transcription factor. This is Leafy/floricaula homolog FL1 (LF1) from Eucalyptus globulus (Tasmanian blue gum).